The primary structure comprises 175 residues: MGKITFYEDRGFQGHCYQCSSNNCLQQPYFSRCNSIRVDVHSWFVYQRPDYRGHQYMLQRGNYPQYGQWMGFDDSIRSCRLIPQHTGTFRMRIYERDDFRGQMSEITDDCPSLQDRFHLTEVNSVRVLEGSWVIYEMPSYRGRQYLLRPGEYRRYLDWGAMNAKVGSLRRVMDFY.

2 Beta/gamma crystallin 'Greek key' domains span residues 2–40 (GKITFYEDRGFQGHCYQCSSNNCLQQPYFSRCNSIRVDV) and 41–83 (HSWF…RLIP). The tract at residues 84 to 88 (QHTGT) is connecting peptide. Beta/gamma crystallin 'Greek key' domains follow at residues 89–129 (FRMR…RVLE) and 130–172 (GSWV…RRVM).

This sequence belongs to the beta/gamma-crystallin family.

In terms of biological role, crystallins are the dominant structural components of the vertebrate eye lens. The sequence is that of Gamma-crystallin A (CRYGA) from Bos taurus (Bovine).